A 267-amino-acid chain; its full sequence is Large ribosomal subunit protein uL4 (267 aa).

It belongs to the universal ribosomal protein uL4 family. Part of the 50S ribosomal subunit.

Its function is as follows. One of the primary rRNA binding proteins, this protein initially binds near the 5'-end of the 23S rRNA. It is important during the early stages of 50S assembly. It makes multiple contacts with different domains of the 23S rRNA in the assembled 50S subunit and ribosome. In terms of biological role, forms part of the polypeptide exit tunnel. The protein is Large ribosomal subunit protein uL4 of Saccharolobus islandicus (strain Y.N.15.51 / Yellowstone #2) (Sulfolobus islandicus).